A 311-amino-acid chain; its full sequence is Pyrimidine-specific ribonucleoside hydrolase RihA (311 aa).

His240 is a catalytic residue.

It belongs to the IUNH family. RihA subfamily.

In terms of biological role, hydrolyzes cytidine or uridine to ribose and cytosine or uracil, respectively. The polypeptide is Pyrimidine-specific ribonucleoside hydrolase RihA (Shigella boydii serotype 4 (strain Sb227)).